An 861-amino-acid polypeptide reads, in one-letter code: Bifunctional uridylyltransferase/uridylyl-removing enzyme (861 aa).

The uridylyltransferase stretch occupies residues 1–321; that stretch reads MKNDNRIIKN…VYHQKQKIIR (321 aa). The interval 322–678 is uridylyl-removing; the sequence is LDDEFQLSNR…IMPHHSQGGT (357 aa). The HD domain maps to 440–562; it reads VDQHTLFVIR…LPHARYLDYL (123 aa). ACT domains are found at residues 679 to 760 and 788 to 861; these read EVFI…AVSR and QLFL…KSKY.

It belongs to the GlnD family. Requires Mg(2+) as cofactor.

It carries out the reaction [protein-PII]-L-tyrosine + UTP = [protein-PII]-uridylyl-L-tyrosine + diphosphate. It catalyses the reaction [protein-PII]-uridylyl-L-tyrosine + H2O = [protein-PII]-L-tyrosine + UMP + H(+). Uridylyltransferase (UTase) activity is inhibited by glutamine, while glutamine activates uridylyl-removing (UR) activity. Modifies, by uridylylation and deuridylylation, the PII regulatory proteins (GlnB and homologs), in response to the nitrogen status of the cell that GlnD senses through the glutamine level. Under low glutamine levels, catalyzes the conversion of the PII proteins and UTP to PII-UMP and PPi, while under higher glutamine levels, GlnD hydrolyzes PII-UMP to PII and UMP (deuridylylation). Thus, controls uridylylation state and activity of the PII proteins, and plays an important role in the regulation of nitrogen assimilation and metabolism. The protein is Bifunctional uridylyltransferase/uridylyl-removing enzyme of Legionella pneumophila subsp. pneumophila (strain Philadelphia 1 / ATCC 33152 / DSM 7513).